A 208-amino-acid polypeptide reads, in one-letter code: Outer-membrane lipoprotein carrier protein (208 aa).

An N-terminal signal peptide occupies residues 1 to 24; it reads MRMNIVQKILSATCFALLPLLAHA.

The protein belongs to the LolA family. Monomer.

The protein localises to the periplasm. Participates in the translocation of lipoproteins from the inner membrane to the outer membrane. Only forms a complex with a lipoprotein if the residue after the N-terminal Cys is not an aspartate (The Asp acts as a targeting signal to indicate that the lipoprotein should stay in the inner membrane). In Dechloromonas aromatica (strain RCB), this protein is Outer-membrane lipoprotein carrier protein.